The chain runs to 183 residues: Oleosin Bn-V (183 aa).

The polar stretch occupies residues 1 to 47 (PARTHHDITTRDQYPLISRDRDQYGMIGRDQYNMSGQNYSKSRQIAK). Repeats lie at residues 11-20 (RDQYPLISRD) and 21-30 (RDQYGMIGRD). The interval 48-119 (ATTAVTAGDS…AAITVFSWIY (72 aa)) is hydrophobic. The next 2 helical transmembrane spans lie at 57–77 (SLLVLSSLTLVGTVIALIVAT) and 99–119 (TGFLSSGAFGIAAITVFSWIY). The tract at residues 154-183 (YGQQHTGEEHDRDRDHRTDRDRTRGTQHTT) is disordered. Residues 159–177 (TGEEHDRDRDHRTDRDRTR) are compositionally biased toward basic and acidic residues.

This sequence belongs to the oleosin family.

It is found in the lipid droplet. The protein localises to the membrane. Functionally, may have a structural role to stabilize the lipid body during desiccation of the seed by preventing coalescence of the oil. Probably interacts with both lipid and phospholipid moieties of lipid bodies. May also provide recognition signals for specific lipase anchorage in lipolysis during seedling growth. In Brassica napus (Rape), this protein is Oleosin Bn-V.